We begin with the raw amino-acid sequence, 947 residues long: Pyruvate, phosphate dikinase 1, chloroplastic (947 aa).

The transit peptide at 1–62 (MAASVSRAIC…GRGQHCSPLR (62 aa)) directs the protein to the chloroplast. Positions 21–54 (DREATSFARRSVAAPRPPHAKAAGVIRSDSGAGR) are disordered. Alanine 63 is modified (N-acetylalanine; partial). At threonine 309 the chain carries Phosphothreonine. Serine 506 carries the phosphoserine modification. Threonine 527 is modified (phosphothreonine; by PDRP1). Serine 528 is subject to Phosphoserine; by PDRP1. Histidine 529 acts as the Tele-phosphohistidine intermediate in catalysis. 7 residues coordinate substrate: arginine 635, arginine 692, glutamate 821, glycine 842, threonine 843, asparagine 844, and aspartate 845. Glutamate 821 contacts Mg(2+). Aspartate 845 contributes to the Mg(2+) binding site. The Proton donor role is filled by cysteine 907.

Belongs to the PEP-utilizing enzyme family. Homotetramer. Requires Mg(2+) as cofactor. In terms of processing, phosphorylation of Thr-527 in the dark inactivates the enzyme, dephosphorylation upon light stimulation reactivates the enzyme. More highly phosphorylated when grown under high rather than low light regimes (70 vs 900 umol photons/m-2/s). the degree of phosphorylation is strictly regulated by light intensity and the light/dark transition has no influence. Phosphorylated in both mesophyll and bundle sheath cells. The phosphorylation at Ser-528 may be important for the phosphorylation at Thr-527 and may also be regulated by light intensity. In terms of tissue distribution, isoform C4PPDKZM1 mainly localized in mesophyll cells and only a low level is found in bundle sheath cells. Isoform CYPPDKZM1 expressed in roots, stems and etiolated leaves.

The protein resides in the plastid. It is found in the chloroplast. It localises to the cytoplasm. The enzyme catalyses pyruvate + phosphate + ATP = phosphoenolpyruvate + AMP + diphosphate + H(+). It functions in the pathway photosynthesis; C4 acid pathway. Its activity is regulated as follows. Activated by light-induced dephosphorylation. Inhibited by dark-induced phosphorylation. Both reactions are catalyzed by PDRP1. Inactivated by cold due to the dissociation of the homotetramer. Independent of circadian regulation. In terms of biological role, formation of phosphoenolpyruvate, which is the primary acceptor of CO(2) in C4 and some Crassulacean acid metabolism plants. In Zea mays (Maize), this protein is Pyruvate, phosphate dikinase 1, chloroplastic.